The following is a 481-amino-acid chain: MSAGPAKNPSVVTRFAPSPTGFLHIGGARTALFNWLFARHNGGQFQLRIEDTDRVRSTKEAIDAIIDGMRWLGLDWDGDITYQFERAPRHTEVAEELLKAGKAYKCFATAEELEAMRAEQRAKKQPQRYDGRWRDRDPSEAPAGAPYVVRLKAEQEGETTLHDLVQGDVTVKNAELDDMILLRSDGTPTYMLAVVVDDHDMGVNHVIRGDDHLNNTFRQLGIIRAMNWDAPQYAHIPLIHGADGAKLSKRHGALGVEAYRDDFGYLPEAICNYLLRLGWGHGDDEIITREQAIEWFDLTSVGRSPSRFDFKKLENINGHYIREADDQRLTDLVKPRVEKTLEQGLSSTEQALLLQAMPFLKPRAKNLNELAENSLFLFEKRPLKLEEKAAKQLENTSGSLLAILRKTLGDLPAWDSESLEKALHDVAEQADLKMGKVAQPLRAALTGRTVSPGIFDVMILLGQDESLARLDDQLSLSPTHS.

The short motif at 17–27 (PSPTGFLHIGG) is the 'HIGH' region element. Basic and acidic residues predominate over residues 118–139 (AEQRAKKQPQRYDGRWRDRDPS). The segment at 118 to 143 (AEQRAKKQPQRYDGRWRDRDPSEAPA) is disordered. Residues 246–250 (KLSKR) carry the 'KMSKS' region motif. Lys-249 contributes to the ATP binding site.

It belongs to the class-I aminoacyl-tRNA synthetase family. Glutamate--tRNA ligase type 1 subfamily. In terms of assembly, monomer.

It localises to the cytoplasm. It catalyses the reaction tRNA(Glu) + L-glutamate + ATP = L-glutamyl-tRNA(Glu) + AMP + diphosphate. In terms of biological role, catalyzes the attachment of glutamate to tRNA(Glu) in a two-step reaction: glutamate is first activated by ATP to form Glu-AMP and then transferred to the acceptor end of tRNA(Glu). The protein is Glutamate--tRNA ligase 2 of Zymomonas mobilis subsp. mobilis (strain ATCC 31821 / ZM4 / CP4).